A 354-amino-acid polypeptide reads, in one-letter code: Photosystem II protein D1 3 (354 aa).

Transmembrane regions (helical) follow at residues 29–46 (YIGW…TATT), 118–133 (HFLI…EWEL), and 142–156 (WIAV…AATA). His-118 is a chlorophyll a binding site. Tyr-126 provides a ligand contact to pheophytin a. Asp-170 and Glu-189 together coordinate [CaMn4O5] cluster. A helical transmembrane segment spans residues 197–218 (FHQLGVAGVFGGALFSAMHGSL). His-198 contributes to the chlorophyll a binding site. A quinone contacts are provided by residues His-215 and 264 to 265 (SF). His-215 contacts Fe cation. Position 272 (His-272) interacts with Fe cation. Residues 274–288 (FLAAWPVIGIWFTAL) traverse the membrane as a helical segment. Residues His-332, Glu-333, Asp-342, and Ala-344 each coordinate [CaMn4O5] cluster. Residues 345–354 (AVEVAPAVRG) constitute a propeptide that is removed on maturation.

It belongs to the reaction center PufL/M/PsbA/D family. PSII is composed of 1 copy each of membrane proteins PsbA, PsbB, PsbC, PsbD, PsbE, PsbF, PsbH, PsbI, PsbJ, PsbK, PsbL, PsbM, PsbT, PsbX, PsbY, PsbZ, Psb30/Ycf12, peripheral proteins PsbO, CyanoQ (PsbQ), PsbU, PsbV and a large number of cofactors. It forms dimeric complexes. The D1/D2 heterodimer binds P680, chlorophylls that are the primary electron donor of PSII, and subsequent electron acceptors. It shares a non-heme iron and each subunit binds pheophytin, quinone, additional chlorophylls, carotenoids and lipids. D1 provides most of the ligands for the Mn4-Ca-O5 cluster of the oxygen-evolving complex (OEC). There is also a Cl(-1) ion associated with D1 and D2, which is required for oxygen evolution. The PSII complex binds additional chlorophylls, carotenoids and specific lipids. serves as cofactor. Tyr-161 forms a radical intermediate that is referred to as redox-active TyrZ, YZ or Y-Z. In terms of processing, C-terminally processed by CtpA; processing is essential to allow assembly of the oxygen-evolving complex and thus photosynthetic growth.

It localises to the cellular thylakoid membrane. The catalysed reaction is 2 a plastoquinone + 4 hnu + 2 H2O = 2 a plastoquinol + O2. Its function is as follows. Photosystem II (PSII) is a light-driven water:plastoquinone oxidoreductase that uses light energy to abstract electrons from H(2)O, generating O(2) and a proton gradient subsequently used for ATP formation. It consists of a core antenna complex that captures photons, and an electron transfer chain that converts photonic excitation into a charge separation. The D1/D2 (PsbA/PsbD) reaction center heterodimer binds P680, the primary electron donor of PSII as well as several subsequent electron acceptors. The polypeptide is Photosystem II protein D1 3 (Synechococcus sp. (strain JA-3-3Ab) (Cyanobacteria bacterium Yellowstone A-Prime)).